Here is a 766-residue protein sequence, read N- to C-terminus: U3 small nucleolar RNA-associated protein 14 homolog C (766 aa).

The disordered stretch occupies residues histidine 14–histidine 42. 4 positions are modified to phosphoserine: serine 28, serine 51, serine 76, and serine 80. A Glycyl lysine isopeptide (Lys-Gly) (interchain with G-Cter in SUMO2) cross-link involves residue lysine 121. Threonine 204 is subject to Phosphothreonine. Coiled coils occupy residues leucine 216–lysine 245 and leucine 316–glutamate 346. Residues methionine 365–leucine 563 form a disordered region. The segment covering glutamate 396 to serine 405 has biased composition (low complexity). 2 positions are modified to phosphoserine: serine 403 and serine 405. Residues alanine 407 to leucine 434 show a composition bias toward basic and acidic residues. Residue serine 443 is modified to Phosphoserine. Lysine 447 is covalently cross-linked (Glycyl lysine isopeptide (Lys-Gly) (interchain with G-Cter in SUMO2)). Serine 451 bears the Phosphoserine mark. Residues glutamine 452 to glutamine 470 adopt a coiled-coil conformation. The span at lysine 466–lysine 475 shows a compositional bias: basic residues. A compositionally biased stretch (basic and acidic residues) spans arginine 502–proline 527. Lysine 517 is covalently cross-linked (Glycyl lysine isopeptide (Lys-Gly) (interchain with G-Cter in SUMO2)). A compositionally biased stretch (polar residues) spans glycine 533–asparagine 542. The span at aspartate 545 to glutamine 555 shows a compositional bias: basic and acidic residues. A Phosphoserine modification is found at serine 567. Lysine 732 is covalently cross-linked (Glycyl lysine isopeptide (Lys-Gly) (interchain with G-Cter in SUMO2)). Residues glutamate 734–leucine 766 form a disordered region.

The protein belongs to the UTP14 family. In terms of tissue distribution, expressed in testis.

Its subcellular location is the nucleus. It localises to the nucleolus. Essential for spermatogenesis. May be required specifically for ribosome biogenesis and hence protein synthesis during male meiosis. This chain is U3 small nucleolar RNA-associated protein 14 homolog C (UTP14C), found in Homo sapiens (Human).